The chain runs to 290 residues: ATP synthase gamma chain (290 aa).

This sequence belongs to the ATPase gamma chain family. In terms of assembly, F-type ATPases have 2 components, CF(1) - the catalytic core - and CF(0) - the membrane proton channel. CF(1) has five subunits: alpha(3), beta(3), gamma(1), delta(1), epsilon(1). CF(0) has three main subunits: a, b and c.

The protein resides in the cell membrane. In terms of biological role, produces ATP from ADP in the presence of a proton gradient across the membrane. The gamma chain is believed to be important in regulating ATPase activity and the flow of protons through the CF(0) complex. The polypeptide is ATP synthase gamma chain (Buchnera aphidicola subsp. Acyrthosiphon pisum (strain 5A)).